We begin with the raw amino-acid sequence, 295 residues long: Hepatic leukemia factor (295 aa).

Residues 34–52 (LHPEDAFSKDRDKGKKLDD) show a composition bias toward basic and acidic residues. Disordered regions lie at residues 34–69 (LHPE…GPTL) and 93–160 (SENG…NRNT). A bZIP domain is found at 225-288 (DDKYWARRRK…GKCKNILAKY (64 aa)). A basic motif region spans residues 227 to 247 (KYWARRRKNNMAAKRSRDARR). Positions 248–255 (LKENQIAI) are leucine-zipper.

This sequence belongs to the bZIP family. PAR subfamily. In terms of assembly, binds DNA specifically as homodimer or heterodimer with other PAR factors. In terms of tissue distribution, isoform HLF43 is abundant in brain, liver and kidney. Isoform HLF36 is expressed only in the liver. Both isoforms accumulate in the liver with different circadian amplitudes. Isoform HLF36 reaches peak expression levels between 8 and 12 p.m. Isoform HLF43 displays a more pronounced fluctuation through the day.

It is found in the nucleus. In Rattus norvegicus (Rat), this protein is Hepatic leukemia factor (Hlf).